The primary structure comprises 375 residues: Succinyl-diaminopimelate desuccinylase (375 aa).

A Zn(2+)-binding site is contributed by His66. The active site involves Asp68. Asp99 is a Zn(2+) binding site. The active-site Proton acceptor is Glu133. The Zn(2+) site is built by Glu134, Glu162, and His348.

It belongs to the peptidase M20A family. DapE subfamily. In terms of assembly, homodimer. It depends on Zn(2+) as a cofactor. Co(2+) serves as cofactor.

It carries out the reaction N-succinyl-(2S,6S)-2,6-diaminopimelate + H2O = (2S,6S)-2,6-diaminopimelate + succinate. Its pathway is amino-acid biosynthesis; L-lysine biosynthesis via DAP pathway; LL-2,6-diaminopimelate from (S)-tetrahydrodipicolinate (succinylase route): step 3/3. In terms of biological role, catalyzes the hydrolysis of N-succinyl-L,L-diaminopimelic acid (SDAP), forming succinate and LL-2,6-diaminopimelate (DAP), an intermediate involved in the bacterial biosynthesis of lysine and meso-diaminopimelic acid, an essential component of bacterial cell walls. The chain is Succinyl-diaminopimelate desuccinylase from Cronobacter sakazakii (strain ATCC BAA-894) (Enterobacter sakazakii).